We begin with the raw amino-acid sequence, 466 residues long: Ribulose bisphosphate carboxylase large chain (466 aa).

Lys-5 is subject to N6,N6,N6-trimethyllysine. Substrate contacts are provided by Asn-114 and Thr-164. The Proton acceptor role is filled by Lys-166. Lys-168 lines the substrate pocket. The Mg(2+) site is built by Lys-192, Asp-194, and Glu-195. An N6-carboxylysine modification is found at Lys-192. Catalysis depends on His-285, which acts as the Proton acceptor. Arg-286, His-318, and Ser-370 together coordinate substrate.

The protein belongs to the RuBisCO large chain family. Type I subfamily. As to quaternary structure, heterohexadecamer of 8 large chains and 8 small chains; disulfide-linked. The disulfide link is formed within the large subunit homodimers. Requires Mg(2+) as cofactor. The disulfide bond which can form in the large chain dimeric partners within the hexadecamer appears to be associated with oxidative stress and protein turnover.

Its subcellular location is the plastid. It localises to the chloroplast. It carries out the reaction 2 (2R)-3-phosphoglycerate + 2 H(+) = D-ribulose 1,5-bisphosphate + CO2 + H2O. The catalysed reaction is D-ribulose 1,5-bisphosphate + O2 = 2-phosphoglycolate + (2R)-3-phosphoglycerate + 2 H(+). RuBisCO catalyzes two reactions: the carboxylation of D-ribulose 1,5-bisphosphate, the primary event in carbon dioxide fixation, as well as the oxidative fragmentation of the pentose substrate in the photorespiration process. Both reactions occur simultaneously and in competition at the same active site. In Drosophyllum lusitanicum (Portuguese sundew), this protein is Ribulose bisphosphate carboxylase large chain.